Reading from the N-terminus, the 227-residue chain is MSEEEVVVLNFWPSMFGARVIMALEEKEIKFEYKEEDVFGQKTDLLLQSNPVNKKIPVLIHNGKPVCESNIIVEYIDEVWKDDKTLRLLPSDPYQKSQCRFWADLIDKKVFDAGRRTWTKRGKEQEEAKQEFIEILKVLERELGDKVYFGGNDNVSMVDLVLISYYPWFHTWETIGGFSVEDHTPKLMDWIRKCLTRPAISKSLPDPLKIFDRVTQIIKVHEFFYGY.

In terms of domain architecture, GST N-terminal spans 4–84 (EEVVVLNFWP…YIDEVWKDDK (81 aa)). Glutathione is bound by residues 14 to 15 (SM), 41 to 42 (QK), 55 to 56 (KI), and 68 to 69 (ES). The 126-residue stretch at 92–217 (DPYQKSQCRF…LKIFDRVTQI (126 aa)) folds into the GST C-terminal domain.

Belongs to the GST superfamily. Tau family.

It localises to the cytoplasm. The protein localises to the cytosol. It carries out the reaction RX + glutathione = an S-substituted glutathione + a halide anion + H(+). May be involved in the conjugation of reduced glutathione to a wide number of exogenous and endogenous hydrophobic electrophiles and have a detoxification role against certain herbicides. The polypeptide is Glutathione S-transferase U27 (GSTU27) (Arabidopsis thaliana (Mouse-ear cress)).